The following is a 511-amino-acid chain: Exodeoxyribonuclease 7 large subunit (511 aa).

This sequence belongs to the XseA family. Heterooligomer composed of large and small subunits.

The protein localises to the cytoplasm. The catalysed reaction is Exonucleolytic cleavage in either 5'- to 3'- or 3'- to 5'-direction to yield nucleoside 5'-phosphates.. Bidirectionally degrades single-stranded DNA into large acid-insoluble oligonucleotides, which are then degraded further into small acid-soluble oligonucleotides. This chain is Exodeoxyribonuclease 7 large subunit, found in Brucella suis (strain ATCC 23445 / NCTC 10510).